Consider the following 256-residue polypeptide: Post-translational flagellin modification protein A (256 aa).

Substrate is bound at residue S145. The active-site Proton acceptor is the Y168.

The protein belongs to the short-chain dehydrogenases/reductases (SDR) family.

Required for biosynthesis of LAH modification in the post-translational modification of Campylobacter coli flagellin. The chain is Post-translational flagellin modification protein A (ptmA) from Campylobacter coli.